A 229-amino-acid polypeptide reads, in one-letter code: Potassium/proton antiporter CemA (229 aa).

4 helical membrane-spanning segments follow: residues 7–27 (LASL…SLSF), 106–126 (IILH…YFFL), 154–174 (ILLV…ELMI), and 189–209 (IISG…KYWI).

This sequence belongs to the CemA family.

The protein resides in the plastid. Its subcellular location is the chloroplast inner membrane. It catalyses the reaction K(+)(in) + H(+)(out) = K(+)(out) + H(+)(in). In terms of biological role, contributes to K(+)/H(+) antiport activity by supporting proton efflux to control proton extrusion and homeostasis in chloroplasts in a light-dependent manner to modulate photosynthesis. Prevents excessive induction of non-photochemical quenching (NPQ) under continuous-light conditions. Indirectly promotes efficient inorganic carbon uptake into chloroplasts. This Phalaenopsis aphrodite subsp. formosana (Moth orchid) protein is Potassium/proton antiporter CemA.